The chain runs to 528 residues: Nucleobase-ascorbate transporter 5 (528 aa).

Residues 1–20 are disordered; the sequence is MSAPKSGGDPLPHPPKEQLP. The next 12 membrane-spanning stretches (helical) occupy residues 35–55, 71–91, 93–113, 133–153, 159–179, 181–201, 219–239, 285–305, 367–387, 390–410, 418–438, and 460–479; these read AVLLGFQHYLVMLGTTVLIPS, LIQTILFVAGLNTLLQTVFGT, LPAVIGASYTFVPVTISIMLS, TQGALIVASTLQIILGFSGLW, FLSPLSAAPLVGLVGYGLYEL, FPGVAKCIEIGLPGLIILILI, FAVIFSVAIVWLYAFFLTLGG, FAMMMASFVALVESTGAFIAV, AGFMIFFSILGKFGAVFASIP, IIAALYCLFFAYVGAGGLSLL, FRTLFILGFSIFLGLSIPQYF, and MVNVPFSSKAFVGGCVAYLL.

This sequence belongs to the nucleobase:cation symporter-2 (NCS2) (TC 2.A.40) family. As to expression, weakly expressed in the vasculature of developing leaves.

Its subcellular location is the membrane. The protein is Nucleobase-ascorbate transporter 5 (NAT5) of Arabidopsis thaliana (Mouse-ear cress).